The chain runs to 208 residues: Small ribosomal subunit protein uS4 (208 aa).

The S4 RNA-binding domain occupies 98 to 158 (GRLDNVVYRM…EKSKKQARIK (61 aa)).

It belongs to the universal ribosomal protein uS4 family. As to quaternary structure, part of the 30S ribosomal subunit. Contacts protein S5. The interaction surface between S4 and S5 is involved in control of translational fidelity.

Its function is as follows. One of the primary rRNA binding proteins, it binds directly to 16S rRNA where it nucleates assembly of the body of the 30S subunit. Functionally, with S5 and S12 plays an important role in translational accuracy. This Actinobacillus pleuropneumoniae serotype 5b (strain L20) protein is Small ribosomal subunit protein uS4.